The sequence spans 870 residues: NEDD4-like E3 ubiquitin-protein ligase WWP2 (870 aa).

The C2 domain occupies 1 to 117 (MASASSSRAG…KNNGGKMENM (117 aa)). The tract at residues 151-299 (VPNGSALTDG…QQLPAAAQAP (149 aa)) is disordered. Composition is skewed to polar residues over residues 152 to 171 (PNGSALTDGSQLPSRDSSGT) and 200 to 210 (SARTTPATGEQ). Ser-211 is modified (phosphoserine). Polar residues-rich tracts occupy residues 222–243 (VKNSGHSGLANGTVNDEPTTAT) and 263–272 (VTPNPNTTSL). Residues 290–299 (QQLPAAAQAP) show a composition bias toward low complexity. 4 WW domains span residues 300 to 333 (DALPAGWEQRELPNGRVYYVDHNTKTTTWERPLP), 330 to 363 (RPLPPGWEKRTDPRGRFYYVDHNTRTTTWQRPTA), 405 to 437 (GPLPPGWEKRQDNGRVYYVNHNTRTTQWEDPRT), and 444 to 477 (PALPPGWEMKYTSEGVRYFVDHNTRTTTFKDPRP). In terms of domain architecture, HECT spans 536 to 870 (KPYDLRRRLY…IEETEGFGQE (335 aa)). Cys-838 serves as the catalytic Glycyl thioester intermediate.

As to quaternary structure, interacts with POU5F1, RBP1, EGR2 and SLC11A2. Interacts with SCNN1A, SCNN1B, SCNN1G, WBP1, WBP2 and ATN1. Interacts with ERBB4, NDFIP1 and NDFIP2. Interacts with ARRDC4. Interacts (via WW domains) with ARRDC1 (via PPxY motifs); ubiquitinates ARRDC1. Interacts (via WW domains) with ARRDC2 and ARRDC3. In terms of assembly, (Microbial infection) Interacts with adenovirus type 2 PIII. In terms of processing, autoubiquitinated. Ubiquitinated by the SCF(FBXL15) complex, leading to its degradation by the proteasome. In terms of tissue distribution, detected in heart, throughout the brain, placenta, lung, liver, muscle, kidney and pancreas. Also detected in spleen and peripheral blood leukocytes.

It is found in the nucleus. It catalyses the reaction S-ubiquitinyl-[E2 ubiquitin-conjugating enzyme]-L-cysteine + [acceptor protein]-L-lysine = [E2 ubiquitin-conjugating enzyme]-L-cysteine + N(6)-ubiquitinyl-[acceptor protein]-L-lysine.. It functions in the pathway protein modification; protein ubiquitination. With respect to regulation, activated by NDFIP1- and NDFIP2-binding. E3 ubiquitin-protein ligase which accepts ubiquitin from an E2 ubiquitin-conjugating enzyme in the form of a thioester and then directly transfers the ubiquitin to targeted substrates. Polyubiquitinates POU5F1 by 'Lys-63'-linked conjugation and promotes it to proteasomal degradation; in embryonic stem cells (ESCs) the ubiquitination is proposed to regulate POU5F1 protein level. Ubiquitinates EGR2 and promotes it to proteasomal degradation; in T-cells the ubiquitination inhibits activation-induced cell death. Ubiquitinates SLC11A2; the ubiquitination is enhanced by presence of NDFIP1 and NDFIP2. Ubiquitinates RPB1 and promotes it to proteasomal degradation. This Homo sapiens (Human) protein is NEDD4-like E3 ubiquitin-protein ligase WWP2 (WWP2).